The following is a 166-amino-acid chain: 16S rRNA aminocarboxypropyltransferase (166 aa).

Thr17, Val62, Ile84, Tyr99, and Ser103 together coordinate S-adenosyl-L-methionine.

The protein belongs to the TDD superfamily. TSR3 family.

It localises to the cytoplasm. The enzyme catalyses an N(1)-methylpseudouridine in rRNA + S-adenosyl-L-methionine = N(1)-methyl-N(3)-[(3S)-3-amino-3-carboxypropyl]pseudouridine in rRNA + S-methyl-5'-thioadenosine + H(+). In terms of biological role, aminocarboxypropyltransferase that catalyzes the aminocarboxypropyl transfer on pseudouridine corresponding to position 914 in M.jannaschii 16S rRNA. It constitutes the last step in biosynthesis of the hypermodified N1-methyl-N3-(3-amino-3-carboxypropyl) pseudouridine (m1acp3-Psi). This is 16S rRNA aminocarboxypropyltransferase from Saccharolobus solfataricus (strain ATCC 35092 / DSM 1617 / JCM 11322 / P2) (Sulfolobus solfataricus).